The primary structure comprises 176 residues: Ribosome maturation factor RimM (176 aa).

One can recognise a PRC barrel domain in the interval 100 to 173; sequence PEEYYDYQLI…RLRIDPPPGL (74 aa).

This sequence belongs to the RimM family. As to quaternary structure, binds ribosomal protein uS19.

It is found in the cytoplasm. In terms of biological role, an accessory protein needed during the final step in the assembly of 30S ribosomal subunit, possibly for assembly of the head region. Essential for efficient processing of 16S rRNA. May be needed both before and after RbfA during the maturation of 16S rRNA. It has affinity for free ribosomal 30S subunits but not for 70S ribosomes. The chain is Ribosome maturation factor RimM from Acidothermus cellulolyticus (strain ATCC 43068 / DSM 8971 / 11B).